A 505-amino-acid polypeptide reads, in one-letter code: MSTVAPAGALPSYSDVLARYEPVIGLETHVELGTASKMFCGCATAFGAEPNTQVCPVCLGLPGSLPVVNEAAVRFAVMIGLALHCEIASWCRFARKNYFYPDMPKNFQISQYDEPLCTNGWLDVEVEGEVHRVGITRVHMEEDTGKSLHVGGATGRIHGATHSLVDYNRAGIPLVEIVTEPDVRSPEVARAYVDELRELIRALGVSDVRMEQGSLRCDANVSLRPRPAPGDPDAPFGTRSETKNLNSLRSVERAVRYETTRQAALLDDGQRIIQETRHFDEASGRTSSGRSKEEATDYRYFPEPDLTPLALPAEYVERLRAGLPELPAARRARLIAEHGYTARDLQDLRNAAVLDLVEETIAAGAAPATARKWWLNELARRASDAGLQPRDLKITPTDVARITALVAAGELTDALARKVIDGVLAGEGTPDEVIAGRGLAIVADDSALTAAVDAALLGAPDIAEKVRGGKVNAVGPLVGAVMKAMKGQADAAAVRRLLLERLGVS.

Residues 220-241 (NVSLRPRPAPGDPDAPFGTRSE) are disordered.

It belongs to the GatB/GatE family. GatB subfamily. In terms of assembly, heterotrimer of A, B and C subunits.

The catalysed reaction is L-glutamyl-tRNA(Gln) + L-glutamine + ATP + H2O = L-glutaminyl-tRNA(Gln) + L-glutamate + ADP + phosphate + H(+). It catalyses the reaction L-aspartyl-tRNA(Asn) + L-glutamine + ATP + H2O = L-asparaginyl-tRNA(Asn) + L-glutamate + ADP + phosphate + 2 H(+). Functionally, allows the formation of correctly charged Asn-tRNA(Asn) or Gln-tRNA(Gln) through the transamidation of misacylated Asp-tRNA(Asn) or Glu-tRNA(Gln) in organisms which lack either or both of asparaginyl-tRNA or glutaminyl-tRNA synthetases. The reaction takes place in the presence of glutamine and ATP through an activated phospho-Asp-tRNA(Asn) or phospho-Glu-tRNA(Gln). This is Aspartyl/glutamyl-tRNA(Asn/Gln) amidotransferase subunit B from Frankia casuarinae (strain DSM 45818 / CECT 9043 / HFP020203 / CcI3).